Here is a 97-residue protein sequence, read N- to C-terminus: Mitochondrial import inner membrane translocase subunit Tim8 A (97 aa).

Positions 43–66 (CWEKCMDKPGPKLDSRAEACFVNC) match the Twin CX3C motif motif. 2 cysteine pairs are disulfide-bonded: Cys43-Cys66 and Cys47-Cys62. Phosphoserine is present on residues Ser57, Ser87, Ser94, and Ser96.

Belongs to the small Tim family. Heterohexamer; composed of 3 copies of TIMM8A and 3 copies of TIMM13, named soluble 70 kDa complex. Associates with the TIM22 complex, whose core is composed of TIMM22. Present at high level in liver and brain, and at lower level in muscle and heart. In CNS sections, it is predominantly present in the soma and the dendritic portion of the Purkinje cells of the cerebellum, but not in the glial cells. Scattered expression also is also detected in the brain stem, olfactory bulb, substantia nigra, hippocampus and striatum (at protein level). Ubiquitously expressed.

It is found in the mitochondrion inner membrane. Mitochondrial intermembrane chaperone that participates in the import and insertion of some multi-pass transmembrane proteins into the mitochondrial inner membrane. Also required for the transfer of beta-barrel precursors from the TOM complex to the sorting and assembly machinery (SAM complex) of the outer membrane. Acts as a chaperone-like protein that protects the hydrophobic precursors from aggregation and guide them through the mitochondrial intermembrane space. The TIMM8-TIMM13 complex mediates the import of proteins such as TIMM23, SLC25A12/ARALAR1 and SLC25A13/ARALAR2, while the predominant TIMM9-TIMM10 70 kDa complex mediates the import of much more proteins. The protein is Mitochondrial import inner membrane translocase subunit Tim8 A (Timm8a1) of Mus musculus (Mouse).